A 529-amino-acid chain; its full sequence is Bifunctional purine biosynthesis protein PurH (529 aa).

Residues 1 to 148 enclose the MGS-like domain; sequence MNNARPIRRA…KNHKDTTIIV (148 aa).

Belongs to the PurH family.

It carries out the reaction (6R)-10-formyltetrahydrofolate + 5-amino-1-(5-phospho-beta-D-ribosyl)imidazole-4-carboxamide = 5-formamido-1-(5-phospho-D-ribosyl)imidazole-4-carboxamide + (6S)-5,6,7,8-tetrahydrofolate. The catalysed reaction is IMP + H2O = 5-formamido-1-(5-phospho-D-ribosyl)imidazole-4-carboxamide. Its pathway is purine metabolism; IMP biosynthesis via de novo pathway; 5-formamido-1-(5-phospho-D-ribosyl)imidazole-4-carboxamide from 5-amino-1-(5-phospho-D-ribosyl)imidazole-4-carboxamide (10-formyl THF route): step 1/1. The protein operates within purine metabolism; IMP biosynthesis via de novo pathway; IMP from 5-formamido-1-(5-phospho-D-ribosyl)imidazole-4-carboxamide: step 1/1. The sequence is that of Bifunctional purine biosynthesis protein PurH from Shewanella halifaxensis (strain HAW-EB4).